We begin with the raw amino-acid sequence, 585 residues long: Probable long-chain-fatty-acid--AMP ligase FadD30 (585 aa).

It belongs to the ATP-dependent AMP-binding enzyme family.

It participates in lipid metabolism; fatty acid biosynthesis. Functionally, catalyzes the activation of long-chain fatty acids as acyl-adenylates (acyl-AMP), which are then transferred to a multifunctional polyketide synthase (PKS) for further chain extension. The sequence is that of Probable long-chain-fatty-acid--AMP ligase FadD30 (fadD30) from Mycobacterium tuberculosis (strain CDC 1551 / Oshkosh).